A 259-amino-acid polypeptide reads, in one-letter code: 5'-nucleotidase SurE (259 aa).

A divalent metal cation contacts are provided by Asp10, Asp11, Ser41, and Asn96.

This sequence belongs to the SurE nucleotidase family. Requires a divalent metal cation as cofactor.

The protein localises to the cytoplasm. It catalyses the reaction a ribonucleoside 5'-phosphate + H2O = a ribonucleoside + phosphate. Its function is as follows. Nucleotidase that shows phosphatase activity on nucleoside 5'-monophosphates. This is 5'-nucleotidase SurE from Wolinella succinogenes (strain ATCC 29543 / DSM 1740 / CCUG 13145 / JCM 31913 / LMG 7466 / NCTC 11488 / FDC 602W) (Vibrio succinogenes).